The following is a 201-amino-acid chain: 3-isopropylmalate dehydratase small subunit (201 aa).

This sequence belongs to the LeuD family. LeuD type 1 subfamily. As to quaternary structure, heterodimer of LeuC and LeuD.

The enzyme catalyses (2R,3S)-3-isopropylmalate = (2S)-2-isopropylmalate. The protein operates within amino-acid biosynthesis; L-leucine biosynthesis; L-leucine from 3-methyl-2-oxobutanoate: step 2/4. In terms of biological role, catalyzes the isomerization between 2-isopropylmalate and 3-isopropylmalate, via the formation of 2-isopropylmaleate. In Nitrobacter winogradskyi (strain ATCC 25391 / DSM 10237 / CIP 104748 / NCIMB 11846 / Nb-255), this protein is 3-isopropylmalate dehydratase small subunit.